Reading from the N-terminus, the 185-residue chain is dCTP deaminase (185 aa).

DCTP is bound by residues 107–112 (KSTYAR), 131–133 (TLE), Gln152, Tyr166, and Gln176. Residue Glu133 is the Proton donor/acceptor of the active site.

The protein belongs to the dCTP deaminase family. In terms of assembly, homotrimer.

The catalysed reaction is dCTP + H2O + H(+) = dUTP + NH4(+). Its pathway is pyrimidine metabolism; dUMP biosynthesis; dUMP from dCTP (dUTP route): step 1/2. Functionally, catalyzes the deamination of dCTP to dUTP. This chain is dCTP deaminase, found in Wolbachia pipientis wMel.